Consider the following 765-residue polypeptide: Putative chloride channel-like protein CLC-g (765 aa).

12 helical membrane passes run 67–87 (VFMK…IGFA), 116–136 (FVVF…ITAF), 167–187 (LIIK…IGKA), 190–210 (MVHT…KRYR), 232–252 (GAAA…LFAL), 262–282 (ALLW…RALI), 315–335 (VLPV…YNFL), 355–375 (ILLA…LPFL), 438–458 (FSVL…YGIV), 462–482 (GLFV…GMLL), 494–514 (AVLG…STCV), and 515–535 (ILLE…VLLI). Positions 568-640 (MRQLLVGDVV…LLKKRVFMPS (73 aa)) constitute a CBS 1 domain. Ser-646 carries the phosphoserine modification. Residues 687-748 (FSNASPYTVV…PEHILGLHPS (62 aa)) form the CBS 2 domain. Residues 715–735 (HLLVIPKTSNRPPVVGILTRH) traverse the membrane as a helical segment.

The protein belongs to the chloride channel (TC 2.A.49) family. Homodimer. Interacts with PP2A5.

It localises to the membrane. Its function is as follows. Putative voltage-gated chloride channel. The chain is Putative chloride channel-like protein CLC-g (CLC-G) from Arabidopsis thaliana (Mouse-ear cress).